A 284-amino-acid polypeptide reads, in one-letter code: Formamidopyrimidine-DNA glycosylase (284 aa).

Pro2 acts as the Schiff-base intermediate with DNA in catalysis. Glu3 serves as the catalytic Proton donor. The Proton donor; for beta-elimination activity role is filled by Lys59. Residues His94 and Arg113 each coordinate DNA. The FPG-type zinc finger occupies 239 to 273 (KVHTKKDQPCSVCNQLIVKKKINGRGSYFCLNCQK). Residue Arg263 is the Proton donor; for delta-elimination activity of the active site.

The protein belongs to the FPG family. As to quaternary structure, monomer. The cofactor is Zn(2+).

It carries out the reaction Hydrolysis of DNA containing ring-opened 7-methylguanine residues, releasing 2,6-diamino-4-hydroxy-5-(N-methyl)formamidopyrimidine.. The catalysed reaction is 2'-deoxyribonucleotide-(2'-deoxyribose 5'-phosphate)-2'-deoxyribonucleotide-DNA = a 3'-end 2'-deoxyribonucleotide-(2,3-dehydro-2,3-deoxyribose 5'-phosphate)-DNA + a 5'-end 5'-phospho-2'-deoxyribonucleoside-DNA + H(+). Involved in base excision repair of DNA damaged by oxidation or by mutagenic agents. Acts as a DNA glycosylase that recognizes and removes damaged bases. Has a preference for oxidized purines, such as 7,8-dihydro-8-oxoguanine (8-oxoG). Has AP (apurinic/apyrimidinic) lyase activity and introduces nicks in the DNA strand. Cleaves the DNA backbone by beta-delta elimination to generate a single-strand break at the site of the removed base with both 3'- and 5'-phosphates. This is Formamidopyrimidine-DNA glycosylase (mutM) from Mycoplasma genitalium (strain ATCC 33530 / DSM 19775 / NCTC 10195 / G37) (Mycoplasmoides genitalium).